A 59-amino-acid chain; its full sequence is Small ribosomal subunit protein eS30 (59 aa).

Residues 1-35 (KVHGSLARAGKVRGQTPKVAKQEKKKKKTGRAKRR) are disordered. Residues 23–35 (EKKKKKTGRAKRR) are compositionally biased toward basic residues. Position 51 is an N6-succinyllysine (Lys51).

The protein belongs to the eukaryotic ribosomal protein eS30 family.

The chain is Small ribosomal subunit protein eS30 (Fau) from Mus spicilegus (Steppe mouse).